Here is a 374-residue protein sequence, read N- to C-terminus: Aminodeoxychorismate lyase (374 aa).

It belongs to the class-IV pyridoxal-phosphate-dependent aminotransferase family. In terms of assembly, homodimer. Pyridoxal 5'-phosphate serves as cofactor.

It is found in the cytoplasm. It carries out the reaction 4-amino-4-deoxychorismate = 4-aminobenzoate + pyruvate + H(+). It participates in cofactor biosynthesis; tetrahydrofolate biosynthesis; 4-aminobenzoate from chorismate: step 2/2. Converts 4-amino-4-deoxychorismate into 4-aminobenzoate (PABA) and pyruvate. The chain is Aminodeoxychorismate lyase (ABZ2) from Saccharomyces cerevisiae (strain ATCC 204508 / S288c) (Baker's yeast).